The primary structure comprises 599 residues: Leishmanolysin (599 aa).

Residues 1–39 (MSVDSSSTHRHRSVAARLVRLAAAGAAVIAAVGTAAAWA) form the signal peptide. Positions 40–97 (HAGAVQHRCIHDAMQARVRQSVARHHTAPGAVSAVGLPYVTLDTAAAADRRPGSAPTV) are cleaved as a propeptide — activation peptide. 2 disulfide bridges follow: Cys-122/Cys-139 and Cys-188/Cys-227. His-261 lines the Zn(2+) pocket. Residue Glu-262 is part of the active site. A Zn(2+)-binding site is contributed by His-265. The N-linked (GlcNAc...) asparagine glycan is linked to Asn-297. Intrachain disulfides connect Cys-311–Cys-383, Cys-390–Cys-452, Cys-403–Cys-422, Cys-412–Cys-486, Cys-463–Cys-507, Cys-512–Cys-562, and Cys-532–Cys-555. Residue His-331 participates in Zn(2+) binding. Asn-394 is a glycosylation site (N-linked (GlcNAc...) asparagine). A lipid anchor (GPI-anchor amidated asparagine) is attached at Asn-574. A propeptide spans 575–599 (AAAGRRGPRAAATALLVAALLAVAL) (removed in mature form).

Belongs to the peptidase M8 family. It depends on Zn(2+) as a cofactor.

It localises to the cell membrane. The enzyme catalyses Preference for hydrophobic residues at P1 and P1' and basic residues at P2' and P3'. A model nonapeptide is cleaved at -Ala-Tyr-|-Leu-Lys-Lys-.. Its function is as follows. Has an integral role during the infection of macrophages in the mammalian host. The sequence is that of Leishmanolysin (gp63) from Leishmania chagasi.